A 466-amino-acid polypeptide reads, in one-letter code: Asparagine--tRNA ligase (466 aa).

This sequence belongs to the class-II aminoacyl-tRNA synthetase family. As to quaternary structure, homodimer.

The protein resides in the cytoplasm. The enzyme catalyses tRNA(Asn) + L-asparagine + ATP = L-asparaginyl-tRNA(Asn) + AMP + diphosphate + H(+). In Aeromonas hydrophila subsp. hydrophila (strain ATCC 7966 / DSM 30187 / BCRC 13018 / CCUG 14551 / JCM 1027 / KCTC 2358 / NCIMB 9240 / NCTC 8049), this protein is Asparagine--tRNA ligase.